The following is a 274-amino-acid chain: Large ribosomal subunit protein uL2 (274 aa).

Residues 222 to 274 (GVAMNPVDHPHGGGEGRGKGHHPQSPWGQLAKGYKTRRGKKASDKLIVRRRNG) are disordered. Residues 229–239 (DHPHGGGEGRG) are compositionally biased toward basic and acidic residues.

It belongs to the universal ribosomal protein uL2 family. As to quaternary structure, part of the 50S ribosomal subunit. Forms a bridge to the 30S subunit in the 70S ribosome.

Its function is as follows. One of the primary rRNA binding proteins. Required for association of the 30S and 50S subunits to form the 70S ribosome, for tRNA binding and peptide bond formation. It has been suggested to have peptidyltransferase activity; this is somewhat controversial. Makes several contacts with the 16S rRNA in the 70S ribosome. This chain is Large ribosomal subunit protein uL2, found in Thermosipho africanus (strain TCF52B).